Here is a 106-residue protein sequence, read N- to C-terminus: Cell division topological specificity factor (106 aa).

Belongs to the MinE family.

Its function is as follows. Prevents the cell division inhibition by proteins MinC and MinD at internal division sites while permitting inhibition at polar sites. This ensures cell division at the proper site by restricting the formation of a division septum at the midpoint of the long axis of the cell. This is Cell division topological specificity factor from Prochlorococcus marinus (strain SARG / CCMP1375 / SS120).